The following is a 175-amino-acid chain: Translation initiation factor IF-3 (175 aa).

The protein belongs to the IF-3 family. As to quaternary structure, monomer.

The protein resides in the cytoplasm. Its function is as follows. IF-3 binds to the 30S ribosomal subunit and shifts the equilibrium between 70S ribosomes and their 50S and 30S subunits in favor of the free subunits, thus enhancing the availability of 30S subunits on which protein synthesis initiation begins. This Staphylococcus aureus (strain NCTC 8325 / PS 47) protein is Translation initiation factor IF-3.